Consider the following 292-residue polypeptide: 1,4-dihydroxy-2-naphthoate octaprenyltransferase (292 aa).

6 helical membrane passes run 35–55 (AAVWWKALLALAVAVALVIGV), 101–121 (ALAGLVLALLSAPWLIAVGAI), 137–157 (GYAGFGELAVFVFFGPVAVLG), 166–186 (VDWVGLAQAVATGALSCSVLV), 220–240 (LLAVAGVLTFVLMLATPWCVV), and 271–291 (TGLAMLVWALAVAGALAFGQL).

It belongs to the MenA family. Type 1 subfamily. It depends on Mg(2+) as a cofactor.

It localises to the cell membrane. It carries out the reaction an all-trans-polyprenyl diphosphate + 1,4-dihydroxy-2-naphthoate + H(+) = a 2-demethylmenaquinol + CO2 + diphosphate. It participates in quinol/quinone metabolism; menaquinone biosynthesis; menaquinol from 1,4-dihydroxy-2-naphthoate: step 1/2. Activity is abolished by EDTA. Inhibited by Ro 48-8071, which is non-competitive with regard to DHNA and competitive with regard to the isoprenyldiphosphate substrate. In terms of biological role, conversion of 1,4-dihydroxy-2-naphthoate (DHNA) to demethylmenaquinone (DMK). Can use a variety of allylic isoprenyl diphosphates as substrates but has a requirement for at least three isoprene units. The chain is 1,4-dihydroxy-2-naphthoate octaprenyltransferase from Mycobacterium tuberculosis (strain ATCC 25618 / H37Rv).